The chain runs to 613 residues: tRNA 5-methylaminomethyl-2-thiouridine biosynthesis bifunctional protein MnmC (613 aa).

Positions 1-225 are tRNA (mnm(5)s(2)U34)-methyltransferase; it reads MKKAKLIFKD…KREMIKAYLE (225 aa). Residues 252–613 form an FAD-dependent cmnm(5)s(2)U34 oxidoreductase region; it reads IGAGISSAVL…FLVRKLKKGL (362 aa).

This sequence in the N-terminal section; belongs to the methyltransferase superfamily. tRNA (mnm(5)s(2)U34)-methyltransferase family. It in the C-terminal section; belongs to the DAO family. It depends on FAD as a cofactor.

The protein resides in the cytoplasm. The enzyme catalyses 5-aminomethyl-2-thiouridine(34) in tRNA + S-adenosyl-L-methionine = 5-methylaminomethyl-2-thiouridine(34) in tRNA + S-adenosyl-L-homocysteine + H(+). In terms of biological role, catalyzes the last two steps in the biosynthesis of 5-methylaminomethyl-2-thiouridine (mnm(5)s(2)U) at the wobble position (U34) in tRNA. Catalyzes the FAD-dependent demodification of cmnm(5)s(2)U34 to nm(5)s(2)U34, followed by the transfer of a methyl group from S-adenosyl-L-methionine to nm(5)s(2)U34, to form mnm(5)s(2)U34. This chain is tRNA 5-methylaminomethyl-2-thiouridine biosynthesis bifunctional protein MnmC, found in Campylobacter jejuni subsp. doylei (strain ATCC BAA-1458 / RM4099 / 269.97).